The primary structure comprises 711 residues: Ribosomal RNA large subunit methyltransferase K/L (711 aa).

The THUMP domain occupies 43 to 154 (TLYRTLLWSR…RENLVISLDL (112 aa)).

This sequence belongs to the methyltransferase superfamily. RlmKL family.

The protein resides in the cytoplasm. It catalyses the reaction guanosine(2445) in 23S rRNA + S-adenosyl-L-methionine = N(2)-methylguanosine(2445) in 23S rRNA + S-adenosyl-L-homocysteine + H(+). The enzyme catalyses guanosine(2069) in 23S rRNA + S-adenosyl-L-methionine = N(2)-methylguanosine(2069) in 23S rRNA + S-adenosyl-L-homocysteine + H(+). Specifically methylates the guanine in position 2445 (m2G2445) and the guanine in position 2069 (m7G2069) of 23S rRNA. The sequence is that of Ribosomal RNA large subunit methyltransferase K/L from Haemophilus influenzae (strain PittEE).